The chain runs to 137 residues: Large ribosomal subunit protein uL16 (137 aa).

This sequence belongs to the universal ribosomal protein uL16 family. Part of the 50S ribosomal subunit.

In terms of biological role, binds 23S rRNA and is also seen to make contacts with the A and possibly P site tRNAs. The chain is Large ribosomal subunit protein uL16 from Streptococcus equi subsp. zooepidemicus (strain H70).